A 375-amino-acid chain; its full sequence is Queuine tRNA-ribosyltransferase (375 aa).

Residue Asp89 is the Proton acceptor of the active site. Substrate is bound by residues 89–93, Asp143, Gln187, and Gly214; that span reads DSGGF. An RNA binding region spans residues 245-251; it reads GVGKPED. Asp264 serves as the catalytic Nucleophile. Positions 269 to 273 are RNA binding; important for wobble base 34 recognition; the sequence is TRNAR. Cys302, Cys304, Cys307, and His333 together coordinate Zn(2+).

The protein belongs to the queuine tRNA-ribosyltransferase family. Homodimer. Within each dimer, one monomer is responsible for RNA recognition and catalysis, while the other monomer binds to the replacement base PreQ1. Zn(2+) is required as a cofactor.

It catalyses the reaction 7-aminomethyl-7-carbaguanine + guanosine(34) in tRNA = 7-aminomethyl-7-carbaguanosine(34) in tRNA + guanine. Its pathway is tRNA modification; tRNA-queuosine biosynthesis. Functionally, catalyzes the base-exchange of a guanine (G) residue with the queuine precursor 7-aminomethyl-7-deazaguanine (PreQ1) at position 34 (anticodon wobble position) in tRNAs with GU(N) anticodons (tRNA-Asp, -Asn, -His and -Tyr). Catalysis occurs through a double-displacement mechanism. The nucleophile active site attacks the C1' of nucleotide 34 to detach the guanine base from the RNA, forming a covalent enzyme-RNA intermediate. The proton acceptor active site deprotonates the incoming PreQ1, allowing a nucleophilic attack on the C1' of the ribose to form the product. After dissociation, two additional enzymatic reactions on the tRNA convert PreQ1 to queuine (Q), resulting in the hypermodified nucleoside queuosine (7-(((4,5-cis-dihydroxy-2-cyclopenten-1-yl)amino)methyl)-7-deazaguanosine). The sequence is that of Queuine tRNA-ribosyltransferase from Salmonella agona (strain SL483).